The sequence spans 287 residues: Mitochondrial dicarboxylate carrier (287 aa).

Solcar repeat units follow at residues 8-88 (SRWY…VRDR), 101-188 (EKVL…AKQL), and 197-280 (DNIF…LRKN). The next 6 helical transmembrane spans lie at 10 to 30 (WYFG…LDLL), 63 to 82 (GLSA…FAIY), 103 to 123 (VLLG…ADLV), 163 to 182 (GATM…LSCY), 203 to 223 (FVAS…LDVL), and 255 to 275 (GLVP…VFLE).

It belongs to the mitochondrial carrier (TC 2.A.29) family. In terms of tissue distribution, present in high amounts in liver and kidney, and at lower levels in all the other tissues analyzed.

It is found in the mitochondrion inner membrane. It carries out the reaction (S)-malate(in) + phosphate(out) = (S)-malate(out) + phosphate(in). It catalyses the reaction malonate(out) + (S)-malate(in) = malonate(in) + (S)-malate(out). The catalysed reaction is (S)-malate(in) + succinate(out) = (S)-malate(out) + succinate(in). The enzyme catalyses (S)-malate(in) + sulfate(out) = (S)-malate(out) + sulfate(in). It carries out the reaction malonate(out) + phosphate(in) = malonate(in) + phosphate(out). It catalyses the reaction succinate(out) + phosphate(in) = succinate(in) + phosphate(out). The catalysed reaction is sulfate(out) + phosphate(in) = sulfate(in) + phosphate(out). The enzyme catalyses malonate(out) + succinate(in) = malonate(in) + succinate(out). Its function is as follows. Catalyzes the electroneutral exchange or flux of physiologically important metabolites such as dicarboxylates (malonate, malate, succinate), inorganic sulfur-containing anions, and phosphate, across mitochondrial inner membrane. Plays an important role in gluconeogenesis, fatty acid metabolism, urea synthesis, and sulfur metabolism, particularly in liver, by supplying the substrates for the different metabolic processes. Regulates fatty acid release from adipocytes, and contributes to systemic insulin sensitivity. This Homo sapiens (Human) protein is Mitochondrial dicarboxylate carrier (SLC25A10).